Here is a 266-residue protein sequence, read N- to C-terminus: Enterotoxin type C-2 (266 aa).

Residues 1–27 (MNKSRFISCVILIFALILVLFTPNVLA) form the signal peptide. The Zn(2+) site is built by Asp-36, His-74, Glu-98, Glu-107, and Asp-110. A disulfide bond links Cys-120 and Cys-137. Zn(2+) is bound by residues His-145, Glu-146, and His-149.

The protein belongs to the staphylococcal/streptococcal toxin family. As to quaternary structure, interacts with host MHC class II molecules composed of alpha/HLA-DRA and beta/HLA-DRB1 chains. Zn(2+) is required as a cofactor.

It is found in the secreted. Functionally, staphylococcal enterotoxin that activates the host immune system by binding as unprocessed molecules to major histocompatibility (MHC) complex class II and T-cell receptor (TCR) molecules. In turn, this ternary complex activates a large number of T-lymphocytes initiating a systemic release of pro-inflammatory cytokines. Also causes the intoxication staphylococcal food poisoning syndrome. The polypeptide is Enterotoxin type C-2 (entC2) (Staphylococcus aureus).